A 124-amino-acid chain; its full sequence is Small ribosomal subunit protein uS13 (124 aa).

The tract at residues 96–124 (LPVRGQRTKTNARTRKGPRRTVAGKKKAK) is disordered.

It belongs to the universal ribosomal protein uS13 family. In terms of assembly, part of the 30S ribosomal subunit. Forms a loose heterodimer with protein S19. Forms two bridges to the 50S subunit in the 70S ribosome.

Located at the top of the head of the 30S subunit, it contacts several helices of the 16S rRNA. In the 70S ribosome it contacts the 23S rRNA (bridge B1a) and protein L5 of the 50S subunit (bridge B1b), connecting the 2 subunits; these bridges are implicated in subunit movement. Contacts the tRNAs in the A and P-sites. This Symbiobacterium thermophilum (strain DSM 24528 / JCM 14929 / IAM 14863 / T) protein is Small ribosomal subunit protein uS13.